The sequence spans 380 residues: 8-amino-7-oxononanoate synthase (380 aa).

Arginine 26 contributes to the substrate binding site. Pyridoxal 5'-phosphate is bound at residue 104-105 (GY). Position 129 (histidine 129) interacts with substrate. Pyridoxal 5'-phosphate is bound by residues serine 175, 200 to 203 (DEAH), and 232 to 235 (TLSK). Lysine 235 carries the N6-(pyridoxal phosphate)lysine modification. Threonine 345 serves as a coordination point for substrate.

The protein belongs to the class-II pyridoxal-phosphate-dependent aminotransferase family. BioF subfamily. In terms of assembly, homodimer. Pyridoxal 5'-phosphate serves as cofactor.

It catalyses the reaction 6-carboxyhexanoyl-[ACP] + L-alanine + H(+) = (8S)-8-amino-7-oxononanoate + holo-[ACP] + CO2. It participates in cofactor biosynthesis; biotin biosynthesis. In terms of biological role, catalyzes the decarboxylative condensation of pimeloyl-[acyl-carrier protein] and L-alanine to produce 8-amino-7-oxononanoate (AON), [acyl-carrier protein], and carbon dioxide. This is 8-amino-7-oxononanoate synthase from Mycolicibacterium vanbaalenii (strain DSM 7251 / JCM 13017 / BCRC 16820 / KCTC 9966 / NRRL B-24157 / PYR-1) (Mycobacterium vanbaalenii).